Reading from the N-terminus, the 917-residue chain is Hexokinase-1 (917 aa).

Residue Met-1 is modified to N-acetylmethionine. A mitochondrial-binding peptide (MBP) region spans residues 1–10 (MIAAQLLAYY). 2 Hexokinase domains span residues 16–458 (DDQV…MVTA) and 464–906 (AEQH…LITA). Residues Arg-30 and 84–89 (DLGGSS) each bind ATP. The tract at residues 73-207 (DGSEKGDFIA…DYDANIVAVV (135 aa)) is hexokinase small subdomain 1. D-glucose 6-phosphate is bound at residue 84–91 (DLGGSSFR). Residues Ser-155, 172-173 (TK), and 208-209 (ND) each bind D-glucose. The segment at 208–447 (NDTVGTMMTC…SDVRFLLSES (240 aa)) is hexokinase large subdomain 1. D-glucose 6-phosphate contacts are provided by Asp-209 and Thr-232. Residues Asn-235, Glu-260, and 291–294 (QLFE) contribute to the D-glucose site. Ser-337 carries the phosphoserine modification. ATP is bound at residue Asn-345. 413 to 415 (DGS) lines the D-glucose 6-phosphate pocket. An ATP-binding site is contributed by 425–426 (RR). Residues Ser-449 and 532-536 (DLGGT) each bind D-glucose 6-phosphate. The hexokinase small subdomain 2 stretch occupies residues 521–655 (DGTENGDFLA…EFDLDVVAVV (135 aa)). 532–537 (DLGGTN) provides a ligand contact to ATP. Residues 603–604 (SF), 620–621 (TK), and 656–657 (ND) each bind D-glucose. The segment at 656–895 (NDTVGTMMTC…CNVSFLLSED (240 aa)) is hexokinase large subdomain 2. D-glucose 6-phosphate is bound by residues Asp-657 and Thr-680. Thr-680 serves as a coordination point for ATP. D-glucose-binding positions include 682–683 (SN), Glu-708, and Glu-742. Residues 747–748 (GM), 784–788 (TKFLS), and 863–867 (TLYKL) contribute to the ATP site. D-glucose 6-phosphate is bound by residues 861–863 (DGT) and Ser-897.

Belongs to the hexokinase family. As to quaternary structure, monomer. Interacts with RABL2/RABL2A; binds preferentially to GTP-bound RABL2. Interacts with VDAC1. The HK1-VDAC1 complex interacts with ATF2. Interacts (via N-terminal spermatogenic cell-specific region) with PFKM (via C-terminus). Interacts with SMAD5. Isoform 2: Erythrocyte specific. Isoform 3: Testis-specific. Isoform 4: Testis-specific.

The protein resides in the mitochondrion outer membrane. Its subcellular location is the cytoplasm. It localises to the cytosol. It catalyses the reaction a D-hexose + ATP = a D-hexose 6-phosphate + ADP + H(+). The enzyme catalyses D-fructose + ATP = D-fructose 6-phosphate + ADP + H(+). The catalysed reaction is D-glucose + ATP = D-glucose 6-phosphate + ADP + H(+). It carries out the reaction D-mannose + ATP = D-mannose 6-phosphate + ADP + H(+). It catalyses the reaction D-glucosamine + ATP = D-glucosamine 6-phosphate + ADP + H(+). It participates in carbohydrate metabolism; hexose metabolism. It functions in the pathway carbohydrate degradation; glycolysis; D-glyceraldehyde 3-phosphate and glycerone phosphate from D-glucose: step 1/4. With respect to regulation, hexokinase is an allosteric enzyme inhibited by its product D-glucose 6-phosphate. Hexokinase activity is inhibited by N-acetyl-D-glucosamine. Its function is as follows. Catalyzes the phosphorylation of various hexoses, such as D-glucose, D-glucosamine, D-fructose, D-mannose and 2-deoxy-D-glucose, to hexose 6-phosphate (D-glucose 6-phosphate, D-glucosamine 6-phosphate, D-fructose 6-phosphate, D-mannose 6-phosphate and 2-deoxy-D-glucose 6-phosphate, respectively). Does not phosphorylate N-acetyl-D-glucosamine. Mediates the initial step of glycolysis by catalyzing phosphorylation of D-glucose to D-glucose 6-phosphate. Involved in innate immunity and inflammation by acting as a pattern recognition receptor for bacterial peptidoglycan. When released in the cytosol, N-acetyl-D-glucosamine component of bacterial peptidoglycan inhibits the hexokinase activity of HK1 and causes its dissociation from mitochondrial outer membrane, thereby activating the NLRP3 inflammasome. In Homo sapiens (Human), this protein is Hexokinase-1.